We begin with the raw amino-acid sequence, 142 residues long: Large ribosomal subunit protein uL13 (142 aa).

This sequence belongs to the universal ribosomal protein uL13 family. Part of the 50S ribosomal subunit.

Functionally, this protein is one of the early assembly proteins of the 50S ribosomal subunit, although it is not seen to bind rRNA by itself. It is important during the early stages of 50S assembly. In Buchnera aphidicola subsp. Acyrthosiphon pisum (strain 5A), this protein is Large ribosomal subunit protein uL13.